Consider the following 559-residue polypeptide: Poly(3-hydroxyalkanoate) polymerase 1 (559 aa).

Residue C296 is part of the active site.

It belongs to the PHA/PHB synthase family. Type II PhaC subfamily.

Its pathway is biopolymer metabolism; poly-(R)-3-hydroxybutanoate biosynthesis. Its function is as follows. Synthesizes poly(3-hydroxyalkanoates) (PHA), complements a mutant of P.putida that does not make PHA. The polypeptide is Poly(3-hydroxyalkanoate) polymerase 1 (Ectopseudomonas oleovorans (Pseudomonas oleovorans)).